The chain runs to 189 residues: Phosphoheptose isomerase (189 aa).

Positions 33 to 189 (CTDTLKAGNK…ELVEREIYGG (157 aa)) constitute an SIS domain. A substrate-binding site is contributed by 48–50 (NGG). 2 residues coordinate Zn(2+): histidine 57 and glutamate 61. Residues glutamate 61, 90–91 (ND), 116–118 (STS), serine 121, and glutamine 168 each bind substrate. Zn(2+)-binding residues include glutamine 168 and histidine 176.

The protein belongs to the SIS family. GmhA subfamily. Zn(2+) is required as a cofactor.

The protein localises to the cytoplasm. The catalysed reaction is 2 D-sedoheptulose 7-phosphate = D-glycero-alpha-D-manno-heptose 7-phosphate + D-glycero-beta-D-manno-heptose 7-phosphate. The protein operates within carbohydrate biosynthesis; D-glycero-D-manno-heptose 7-phosphate biosynthesis; D-glycero-alpha-D-manno-heptose 7-phosphate and D-glycero-beta-D-manno-heptose 7-phosphate from sedoheptulose 7-phosphate: step 1/1. Catalyzes the isomerization of sedoheptulose 7-phosphate in D-glycero-D-manno-heptose 7-phosphate. The sequence is that of Phosphoheptose isomerase from Akkermansia muciniphila (strain ATCC BAA-835 / DSM 22959 / JCM 33894 / BCRC 81048 / CCUG 64013 / CIP 107961 / Muc).